Here is a 206-residue protein sequence, read N- to C-terminus: Ribosomal RNA small subunit methyltransferase G (206 aa).

Residues Gly73, Leu78, 124–125 (VE), and Arg139 contribute to the S-adenosyl-L-methionine site.

It belongs to the methyltransferase superfamily. RNA methyltransferase RsmG family.

It localises to the cytoplasm. It carries out the reaction guanosine(527) in 16S rRNA + S-adenosyl-L-methionine = N(7)-methylguanosine(527) in 16S rRNA + S-adenosyl-L-homocysteine. In terms of biological role, specifically methylates the N7 position of guanine in position 527 of 16S rRNA. The protein is Ribosomal RNA small subunit methyltransferase G of Yersinia pseudotuberculosis serotype O:1b (strain IP 31758).